The chain runs to 138 residues: Flagellar basal body rod protein FlgB (138 aa).

This sequence belongs to the flagella basal body rod proteins family. The basal body constitutes a major portion of the flagellar organelle and consists of a number of rings mounted on a central rod. In Gram-negative bacteria, at least four rings, L, P, S and M are present, whereas Gram-positive bacteria lack the L and P rings. The rod consists of about 26 subunits of FlgG in the distal portion, and FlgB, FlgC and FlgF build up the proximal portion of the rod with about 6 subunits each. Rod assembly occurs by export via the flagellum-specific pathway of its constituent proteins and by their incorporation into the rod structure in the probable order of FlgB, FlgC, FlgF and FlgG. Another protein, FliE, also assembles onto the stable rod structure. Interacts with FliE and peptidoglycan hydrolase FlgJ (via N-terminus), which seems to function as a scaffold or cap for rod assembly.

It is found in the bacterial flagellum basal body. In terms of biological role, structural component of flagellum, the bacterial motility apparatus. Part of the rod structure of flagellar basal body. The protein is Flagellar basal body rod protein FlgB (flgB) of Salmonella typhimurium (strain LT2 / SGSC1412 / ATCC 700720).